Reading from the N-terminus, the 178-residue chain is Outer envelope pore protein 16-2, chloroplastic (178 aa).

The contains beta strands stretch occupies residues 1–102 (MEKSGGRIVM…DALVKNTGKE (102 aa)). The chain crosses the membrane as a helical span at residues 103–119 (SLQWGLAAGLYSGITYG).

Belongs to the Tim17/Tim22/Tim23 family. Plastid outer envelope porin OEP16 (TC 1.B.30) subfamily. In terms of assembly, homodimer and oligomers in membrane. As to expression, detected in pollen and seeds. Present in leaves and cotyledons.

The protein resides in the plastid. Its subcellular location is the chloroplast outer membrane. Its function is as follows. Voltage-dependent high-conductance channel with a slight cation-selectivity; selective for amino acids but excludes triosephosphates or uncharged sugars. Non-essential amino acid-selective channel protein and translocation pore for NADPH:protochlorophyllide oxidoreductase A (PORA) and possibly PORB. This Arabidopsis thaliana (Mouse-ear cress) protein is Outer envelope pore protein 16-2, chloroplastic (OEP162).